Reading from the N-terminus, the 666-residue chain is Calmodulin-binding receptor kinase CaMRLK (666 aa).

The first 17 residues, 1–17 (MFLKLFLLLSLVSFSHS), serve as a signal peptide directing secretion. The Extracellular portion of the chain corresponds to 18-297 (DSSSTVSCPN…KTHRTNHTPL (280 aa)). Residues Asn-27, Asn-45, Asn-52, Asn-68, Asn-78, Asn-89, Asn-110, Asn-126, Asn-137, Asn-148, Asn-154, Asn-189, Asn-212, Asn-229, and Asn-261 are each glycosylated (N-linked (GlcNAc...) asparagine). 7 LRR repeats span residues 79–103 (LTRL…LWSM), 105–127 (GLVS…PVNG), 130–152 (LSAV…FTGF), 153–177 (TNLT…SLSG), 178–197 (LRHL…PISG), 198–224 (LKSL…NLNH), and 226–246 (QFLN…KYRK). A helical membrane pass occupies residues 298-318 (VIGLSSSLGALIIVIFAAAII). A calmodulin binding region spans residues 319–337 (LIRRRMKSARTKSRWAISN). Residues 319 to 666 (LIRRRMKSAR…LLKDIRTVSR (348 aa)) are Cytoplasmic-facing. The Protein kinase domain occupies 395-661 (FGTESVISDG…QQVLGLLKDI (267 aa)). ATP is bound by residues 401–409 (ISDGTCGPL) and Lys-423.

Belongs to the protein kinase superfamily. Ser/Thr protein kinase family. As to quaternary structure, binds calmodulin (CaM) in a calcium-dependent manner. Interacts with CAM1, but not with CAM8. It depends on Mn(2+) as a cofactor. The cofactor is Mg(2+). Post-translationally, calmodulin (CaM)-independent autophosphorylation. In terms of tissue distribution, expressed in reproductive and vegetative tissues, with higher levels in seedlings and flowers, but not in leaves.

The protein localises to the cell membrane. The enzyme catalyses L-seryl-[protein] + ATP = O-phospho-L-seryl-[protein] + ADP + H(+). It catalyses the reaction L-threonyl-[protein] + ATP = O-phospho-L-threonyl-[protein] + ADP + H(+). Not stimulated by calmodulin (CaM). In terms of biological role, can phosphorylate the myelin basic protein in vitro. Required for endosperm development in embryos. Maybe involved in auxin and osmotic stress responses. This chain is Calmodulin-binding receptor kinase CaMRLK, found in Arabidopsis thaliana (Mouse-ear cress).